The chain runs to 675 residues: DNA ligase (675 aa).

Residues 43-47 (DYEYD), 92-93 (SM), and Glu122 each bind NAD(+). The active-site N6-AMP-lysine intermediate is Lys124. Arg145, Glu179, Lys295, and Lys319 together coordinate NAD(+). Positions 413, 416, 431, and 436 each coordinate Zn(2+). The BRCT domain maps to 597–675 (SPDGYYKGKK…ETEAIAKFEQ (79 aa)).

It belongs to the NAD-dependent DNA ligase family. LigA subfamily. Mg(2+) is required as a cofactor. Mn(2+) serves as cofactor.

It carries out the reaction NAD(+) + (deoxyribonucleotide)n-3'-hydroxyl + 5'-phospho-(deoxyribonucleotide)m = (deoxyribonucleotide)n+m + AMP + beta-nicotinamide D-nucleotide.. DNA ligase that catalyzes the formation of phosphodiester linkages between 5'-phosphoryl and 3'-hydroxyl groups in double-stranded DNA using NAD as a coenzyme and as the energy source for the reaction. It is essential for DNA replication and repair of damaged DNA. The protein is DNA ligase of Pediococcus pentosaceus (strain ATCC 25745 / CCUG 21536 / LMG 10740 / 183-1w).